A 261-amino-acid polypeptide reads, in one-letter code: Small ribosomal subunit protein uS2 (261 aa).

Belongs to the universal ribosomal protein uS2 family.

The sequence is that of Small ribosomal subunit protein uS2 from Paracoccus denitrificans (strain Pd 1222).